Reading from the N-terminus, the 374-residue chain is Carnitine monooxygenase oxygenase subunit (374 aa).

The Rieske domain occupies 47-155 (WICVAHSSEL…LEEYAGFVFI (109 aa)). The [2Fe-2S] cluster site is built by Cys-89, His-91, Cys-109, and His-112. Fe cation is bound by residues His-211, His-216, and Asp-325.

Belongs to the bacterial ring-hydroxylating dioxygenase alpha subunit family. CntA subfamily. As to quaternary structure, composed of an oxygenase subunit and a reductase subunit. [2Fe-2S] cluster is required as a cofactor. Fe cation serves as cofactor.

The enzyme catalyses (R)-carnitine + NADH + O2 + H(+) = (3R)-3-hydroxy-4-oxobutanoate + trimethylamine + NAD(+) + H2O. It catalyses the reaction (R)-carnitine + NADPH + O2 + H(+) = (3R)-3-hydroxy-4-oxobutanoate + trimethylamine + NADP(+) + H2O. It functions in the pathway amine and polyamine metabolism; carnitine metabolism. Functionally, converts carnitine to trimethylamine and malic semialdehyde. The polypeptide is Carnitine monooxygenase oxygenase subunit (yeaW) (Escherichia coli O157:H7).